We begin with the raw amino-acid sequence, 981 residues long: uncharacterized protein (981 aa).

One can recognise a Carrier domain in the interval 535–612 (VLLNPVAIEI…SIASIIQKKS (78 aa)). S571 is subject to O-(pantetheine 4'-phosphoryl)serine.

Belongs to the ATP-dependent AMP-binding enzyme family.

This is an uncharacterized protein from Schizosaccharomyces pombe (strain 972 / ATCC 24843) (Fission yeast).